The chain runs to 384 residues: 1-deoxy-D-xylulose 5-phosphate reductoisomerase (384 aa).

Threonine 10, glycine 11, serine 12, isoleucine 13, glycine 36, and asparagine 123 together coordinate NADPH. Lysine 124 lines the 1-deoxy-D-xylulose 5-phosphate pocket. Glutamate 125 serves as a coordination point for NADPH. Mn(2+) is bound at residue aspartate 149. The 1-deoxy-D-xylulose 5-phosphate site is built by serine 150, glutamate 151, serine 175, and histidine 198. Glutamate 151 serves as a coordination point for Mn(2+). Glycine 204 is an NADPH binding site. Residues serine 211, asparagine 216, lysine 217, and glutamate 220 each contribute to the 1-deoxy-D-xylulose 5-phosphate site. Position 220 (glutamate 220) interacts with Mn(2+).

This sequence belongs to the DXR family. Requires Mg(2+) as cofactor. It depends on Mn(2+) as a cofactor.

It carries out the reaction 2-C-methyl-D-erythritol 4-phosphate + NADP(+) = 1-deoxy-D-xylulose 5-phosphate + NADPH + H(+). Its pathway is isoprenoid biosynthesis; isopentenyl diphosphate biosynthesis via DXP pathway; isopentenyl diphosphate from 1-deoxy-D-xylulose 5-phosphate: step 1/6. Catalyzes the NADPH-dependent rearrangement and reduction of 1-deoxy-D-xylulose-5-phosphate (DXP) to 2-C-methyl-D-erythritol 4-phosphate (MEP). The polypeptide is 1-deoxy-D-xylulose 5-phosphate reductoisomerase (Chlorobium phaeovibrioides (strain DSM 265 / 1930) (Prosthecochloris vibrioformis (strain DSM 265))).